The chain runs to 2367 residues: Probable G-protein coupled receptor 179 (2367 aa).

The signal sequence occupies residues Met1–Ala25. Residues Leu26–Arg381 are Extracellular-facing. The tract at residues Tyr62 to Trp245 is cache-like region. N-linked (GlcNAc...) asparagine glycosylation occurs at Asn75. Cys76 and Cys236 are oxidised to a cystine. N-linked (GlcNAc...) asparagine glycosylation occurs at Asn298. The chain crosses the membrane as a helical span at residues Ala382 to Ser402. The Cytoplasmic portion of the chain corresponds to Tyr403–Gly415. The helical transmembrane segment at Val416–Leu436 threads the bilayer. The Extracellular portion of the chain corresponds to Tyr437 to Arg444. A helical membrane pass occupies residues Cys445 to Leu465. A disulfide bridge connects residues Cys445 and Cys537. Residues Lys466–Arg493 are Cytoplasmic-facing. The helical transmembrane segment at Leu494–Glu514 threads the bilayer. At Arg515–Asp543 the chain is on the extracellular side. A helical membrane pass occupies residues Tyr544–Thr564. The Cytoplasmic portion of the chain corresponds to Arg565 to Arg575. The chain crosses the membrane as a helical span at residues Tyr576 to Ala594. The Extracellular segment spans residues Arg595–Thr607. Residues Leu608 to Ile628 form a helical membrane-spanning segment. The Cytoplasmic portion of the chain corresponds to Pro629–Glu2367. Disordered regions lie at residues Ala731–Ala818, Arg869–Pro932, Lys1039–Ser1083, Arg1098–Thr1198, Glu1247–Glu1431, Pro1537–Ala1557, Asp1577–Gln1672, Ala1723–Glu1757, Ser1823–Leu1852, Ala1886–Glu2108, Trp2133–Gly2212, and Gly2308–Glu2367. A compositionally biased stretch (low complexity) spans Ser738–Leu759. Positions Ser773–Asp782 are enriched in basic and acidic residues. The span at Lys1039–Lys1067 shows a compositional bias: basic and acidic residues. The segment covering Leu1153–Met1164 has biased composition (polar residues). Basic and acidic residues-rich tracts occupy residues Glu1171–Arg1181, Arg1277–Pro1299, Gly1341–Gly1362, and Glu1390–Gln1407. A compositionally biased stretch (basic and acidic residues) spans Glu1615–Glu1639. 6 stretches are compositionally biased toward basic and acidic residues: residues Ala1840–Arg1851, Ala1903–Pro1920, Ser1970–Gln1979, Val2023–Pro2054, Lys2061–Gln2070, and Thr2165–Glu2180. A compositionally biased stretch (low complexity) spans Pro2326–Leu2340.

The protein belongs to the G-protein coupled receptor 3 family. Homodimer. Associates with the R7 group RGS-GNB5 complexes, composed of an R7 group RGS subunit (RGS6, RGS7, RGS9 or RGS11) and GNB5, promoting their localization to the cell membrane and regulating the GTPase activator activity of R7 RGS proteins. Interacts with TRPM1. Interacts with GRM6. Interacts with EGFLAM; transsynaptic interaction is required for synaptic organization of photoreceptor cells. As to expression, expressed in the retina.

It localises to the cell membrane. The protein resides in the postsynaptic cell membrane. Its subcellular location is the cell projection. It is found in the dendrite. Functionally, orphan receptor involved in vision. Required for signal transduction through retinal depolarizing bipolar cells. Acts as an atypical G-protein coupled receptor that recruits and regulates the R7 group RGS-GNB5 complexes instead of activating G proteins: promotes the GTPase activator activity of R7 RGS proteins, increasing the GTPase activity of G protein alpha subunits, thereby driving them into their inactive GDP-bound form. Associates with components of metabotropic signaling cascade in retina ON-bipolar neurons, such as TRPM1 and GRM6: may control the ability of the GRM6 cascade to gate TRPM1. The polypeptide is Probable G-protein coupled receptor 179 (Homo sapiens (Human)).